Here is a 150-residue protein sequence, read N- to C-terminus: Cytochrome b5 type B (150 aa).

A propeptide spanning residues 1-15 (MSGSMATAEASGSDG) is cleaved from the precursor. Residues 1 to 21 (MSGSMATAEASGSDGKGQEVE) form a disordered region. S23 carries the post-translational modification Phosphoserine. Residues 24–100 (VTYYRMEEVA…LKQYYIGDIH (77 aa)) form the Cytochrome b5 heme-binding domain. K34 is modified (N6-acetyllysine). S37 bears the Phosphoserine mark. At K39 the chain carries N6-methyllysine. H59 and H83 together coordinate heme. Phosphoserine is present on S84. Residues 122-144 (CWAYWILPIIGAVLLGFLYRYYT) traverse the membrane as a helical segment.

It belongs to the cytochrome b5 family. As to quaternary structure, component of a complex composed of cytochrome b5, NADH-cytochrome b5 reductase (CYB5R3) and MTARC2.

It localises to the mitochondrion outer membrane. Cytochrome b5 is a membrane-bound hemoprotein functioning as an electron carrier for several membrane-bound oxygenases. The sequence is that of Cytochrome b5 type B (CYB5B) from Pongo abelii (Sumatran orangutan).